The sequence spans 62 residues: Large ribosomal subunit protein eL37 (62 aa).

Zn(2+) contacts are provided by cysteine 20, cysteine 23, cysteine 35, and cysteine 38. The segment at cysteine 20 to cysteine 38 adopts a C4-type zinc-finger fold.

The protein belongs to the eukaryotic ribosomal protein eL37 family. As to quaternary structure, part of the 50S ribosomal subunit. Zn(2+) is required as a cofactor.

Binds to the 23S rRNA. This chain is Large ribosomal subunit protein eL37, found in Pyrococcus furiosus (strain ATCC 43587 / DSM 3638 / JCM 8422 / Vc1).